The sequence spans 532 residues: Bone morphogenetic protein receptor type-1A (532 aa).

The N-terminal stretch at 1–23 (MPQLYIYIRLLGAYLFIISRVQG) is a signal peptide. Topologically, residues 24–152 (QNLDSMLHGT…IGPFFDGSIR (129 aa)) are extracellular. Disulfide bonds link C61–C82, C63–C67, and C76–C100. N-linked (GlcNAc...) asparagine glycosylation occurs at N73. Residues 107–109 (DFQ) form a mediates specificity for BMP ligand region. Disulfide bonds link C110-C124 and C125-C130. Residues 153 to 176 (WLVLLISMAVCIIAMIIFSSCFCY) traverse the membrane as a helical segment. Residues 177 to 532 (KHYCKSISSR…KMVESQDVKI (356 aa)) lie on the Cytoplasmic side of the membrane. The GS domain maps to 204-233 (ESLKDLIDQSQSSGSGSGLPLLVQRTIAKQ). One can recognise a Protein kinase domain in the interval 234–525 (IQMVRQVGKG…RIKKTLAKMV (292 aa)). Residues 240–248 (VGKGRYGEV) and K261 contribute to the ATP site. D362 serves as the catalytic Proton acceptor.

This sequence belongs to the protein kinase superfamily. TKL Ser/Thr protein kinase family. TGFB receptor subfamily. As to quaternary structure, interacts with low affinity with GDF5; positively regulates chondrocyte differentiation. Interacts with BMP4. Interacts with SCUBE3. Interacts with TSC22D1/TSC-22. Interacts with BMP2; the interaction may induce HAMP expression. Interacts with BMP6. Interacts with heterodimers composed of BMP2 and BMP6 in vitro; the interaction may induce HAMP expression. Interacts with TGFBR3. It depends on Mg(2+) as a cofactor. Mn(2+) serves as cofactor. In terms of processing, glycosylated. As to expression, highly expressed in skeletal muscle.

It localises to the cell membrane. The protein localises to the cell surface. The enzyme catalyses L-threonyl-[receptor-protein] + ATP = O-phospho-L-threonyl-[receptor-protein] + ADP + H(+). It catalyses the reaction L-seryl-[receptor-protein] + ATP = O-phospho-L-seryl-[receptor-protein] + ADP + H(+). On ligand binding, forms a receptor complex consisting of two type II and two type I transmembrane serine/threonine kinases. Type II receptors phosphorylate and activate type I receptors which autophosphorylate, then bind and activate SMAD transcriptional regulators. Receptor for BMP2, BMP4, GDF5 and GDF6. Positively regulates chondrocyte differentiation through GDF5 interaction. Mediates induction of adipogenesis by GDF6. May promote the expression of HAMP, potentially via its interaction with BMP2. The sequence is that of Bone morphogenetic protein receptor type-1A (BMPR1A) from Homo sapiens (Human).